A 128-amino-acid polypeptide reads, in one-letter code: Con-Ins F1 (128 aa).

Positions 1-24 (MTTSSYFLLVTLGLLLYVCRSSFG) are cleaved as a signal peptide. Disulfide bonds link Cys-29–Cys-104, Cys-41–Cys-107, Cys-53–Cys-120, and Cys-106–Cys-111. A propeptide spans 59 to 89 (LQGGTGKKRGRASPLRKRRAFLSMLKARAKR) (c peptide). Glu-115 is subject to 4-carboxyglutamate; partial. The residue at position 127 (Ser-127) is a Serine amide.

The protein belongs to the insulin family. In terms of assembly, heterodimer of A and B chains; disulfide-linked. In terms of tissue distribution, expressed by the venom gland.

It localises to the secreted. In terms of biological role, this venom insulin facilitates prey capture by rapidly inducing hypoglycemic shock. Intraperitoneal injection of this peptide into zebrafish lowers blood glucose with the same potency than human insulin. In vivo, when applied to water, this peptide reduces overall locomotor activity of zebrafish larvae, observed as a significant decrease in the percentage of time spent swimming and movement frequency. This chain is Con-Ins F1, found in Conus floridulus (Cone snail).